We begin with the raw amino-acid sequence, 594 residues long: Serine/threonine-protein kinase UL13 homolog (594 aa).

2 disordered regions span residues Met1 to Cys105 and Glu128 to Arg183. A compositionally biased stretch (basic residues) spans Arg38–Ser47. One can recognise a Protein kinase domain in the interval Gly223–Pro594. Residues Gly229 to Val237 and Lys248 contribute to the ATP site. The active-site Proton acceptor is Asp349.

Belongs to the protein kinase superfamily. Ser/Thr protein kinase family. Post-translationally, autophosphorylated.

The protein localises to the virion tegument. The protein resides in the host nucleus. The enzyme catalyses L-seryl-[protein] + ATP = O-phospho-L-seryl-[protein] + ADP + H(+). It catalyses the reaction L-threonyl-[protein] + ATP = O-phospho-L-threonyl-[protein] + ADP + H(+). Functionally, multifunctional serine/threonine kinase that plays a role in several processes including egress of virus particles from the nucleus, modulation of the actin cytoskeleton and regulation of viral and cellular gene expression. Regulates the nuclear localization of viral envelopment factors UL34 and UL31 homologs, by phosphorylating the US3 kinase homolog, indicating a role in nuclear egress. Disrupts host nuclear lamins, including LMNA and LMNB1. Phosphorylates the viral Fc receptor composed of glycoproteins E (gE) and I (gI). Phosphorylation of glycoprotein E (gE) by UL13 homolog alters its subcellular localization, from the host early endosome to the plasma membrane. Participates in the transcriptional regulation of cellular and viral mRNAs mainly by phosphorylating the viral transcriptional regulator ICP22 homolog. This chain is Serine/threonine-protein kinase UL13 homolog, found in Equus caballus (Horse).